The following is a 319-amino-acid chain: ATP-dependent 6-phosphofructokinase (319 aa).

Gly11 contacts ATP. 21 to 25 (RAVAR) provides a ligand contact to ADP. ATP contacts are provided by residues 72–73 (RY) and 102–105 (GDGS). Asp103 contacts Mg(2+). Position 125 to 127 (125 to 127 (TID)) interacts with substrate. Asp127 functions as the Proton acceptor in the catalytic mechanism. An ADP-binding site is contributed by Arg154. Residues Arg162 and 169–171 (MGR) contribute to the substrate site. ADP is bound by residues 185–187 (GAE) and Arg211. Substrate-binding positions include Glu222, Arg243, and 249-252 (HIVR).

This sequence belongs to the phosphofructokinase type A (PFKA) family. ATP-dependent PFK group I subfamily. Prokaryotic clade 'B1' sub-subfamily. As to quaternary structure, homotetramer. It depends on Mg(2+) as a cofactor.

It localises to the cytoplasm. It catalyses the reaction beta-D-fructose 6-phosphate + ATP = beta-D-fructose 1,6-bisphosphate + ADP + H(+). Its pathway is carbohydrate degradation; glycolysis; D-glyceraldehyde 3-phosphate and glycerone phosphate from D-glucose: step 3/4. Allosterically activated by ADP and other diphosphonucleosides, and allosterically inhibited by phosphoenolpyruvate. Catalyzes the phosphorylation of D-fructose 6-phosphate to fructose 1,6-bisphosphate by ATP, the first committing step of glycolysis. The sequence is that of ATP-dependent 6-phosphofructokinase from Lacticaseibacillus casei (strain BL23) (Lactobacillus casei).